The following is a 177-amino-acid chain: Large ribosomal subunit protein uL6 (177 aa).

The protein belongs to the universal ribosomal protein uL6 family. In terms of assembly, part of the 50S ribosomal subunit.

In terms of biological role, this protein binds to the 23S rRNA, and is important in its secondary structure. It is located near the subunit interface in the base of the L7/L12 stalk, and near the tRNA binding site of the peptidyltransferase center. This is Large ribosomal subunit protein uL6 from Rhizobium etli (strain ATCC 51251 / DSM 11541 / JCM 21823 / NBRC 15573 / CFN 42).